Consider the following 374-residue polypeptide: MSQSTNVTELARANVRALTPYMSARRLGGNGDVWLNANEYPLATEYQLTAQTFNRYPECQPKLVIERYAAYAGLATDQVLVSRGADEGIELLIRAFCEPAQDAILFCPPTYGMYAVSAETFGVELRTVPTKADWQLDLPAIKASLDRVKLIYICSPNNPTGNLINPADLRAVLELAQGRAIVAIDEAYIEFCPQASVSSWLKDYPNLVILRTLSKAFALAGLRCGFTLANSDIIQLLLKVIAPYPLSTPVADIAAQALSPLGLEQMRQRVSEVTANRAWLQNALQECACVEQVFTSESNYLLARFTASSSVFKTLWDQGIILRDQNKQPSLSNCLRITIGTRQECERVIAALAPLPGVDSPNSTNTASLRKETI.

N6-(pyridoxal phosphate)lysine is present on Lys215.

It belongs to the class-II pyridoxal-phosphate-dependent aminotransferase family. Histidinol-phosphate aminotransferase subfamily. Homodimer. Pyridoxal 5'-phosphate serves as cofactor.

It carries out the reaction L-histidinol phosphate + 2-oxoglutarate = 3-(imidazol-4-yl)-2-oxopropyl phosphate + L-glutamate. It functions in the pathway amino-acid biosynthesis; L-histidine biosynthesis; L-histidine from 5-phospho-alpha-D-ribose 1-diphosphate: step 7/9. The protein is Histidinol-phosphate aminotransferase of Yersinia enterocolitica serotype O:8 / biotype 1B (strain NCTC 13174 / 8081).